Consider the following 453-residue polypeptide: Serine/threonine-protein phosphatase 2A regulatory subunit B'' subunit gamma (453 aa).

2 consecutive EF-hand domains span residues 273 to 308 and 341 to 376; these read PSAL…TMTN and KEPA…IQEL. The Ca(2+) site is built by aspartate 286, aspartate 288, asparagine 290, methionine 292, and glutamate 297.

In terms of assembly, interacts with MCM3AP/GANP, PPP5C, and the phosphatase 2A core enzyme composed of the PPP2CA catalytic subunit and the constant regulatory subunit PPP2R1A. Finds in a complex with ABCB1, TFPI2 and PPP2R3C; leading to the dephosphorylation of ABCB1. As to expression, expressed in all tissues tested including heart, brain, spleen, thymus, lung, liver, kidney and testis.

It is found in the nucleus. Its subcellular location is the cytoplasm. Its function is as follows. May regulate MCM3AP phosphorylation through phosphatase recruitment. May act as a negative regulator of ABCB1 expression and function through the dephosphorylation of ABCB1 by TFPI2/PPP2R3C complex. May play a role in the activation-induced cell death of B-cells. The sequence is that of Serine/threonine-protein phosphatase 2A regulatory subunit B'' subunit gamma (Ppp2r3c) from Mus musculus (Mouse).